The chain runs to 20 residues: 21 kDa cold shock-induced protein (20 aa).

A compositionally biased stretch (basic and acidic residues) spans Thr-1 to Val-12. The segment at Thr-1–Tyr-20 is disordered.

The sequence is that of 21 kDa cold shock-induced protein from Streptococcus thermophilus.